Reading from the N-terminus, the 311-residue chain is Methionyl-tRNA formyltransferase (311 aa).

A (6S)-5,6,7,8-tetrahydrofolate-binding site is contributed by 110-113 (SLLP).

It belongs to the Fmt family.

The enzyme catalyses L-methionyl-tRNA(fMet) + (6R)-10-formyltetrahydrofolate = N-formyl-L-methionyl-tRNA(fMet) + (6S)-5,6,7,8-tetrahydrofolate + H(+). Functionally, attaches a formyl group to the free amino group of methionyl-tRNA(fMet). The formyl group appears to play a dual role in the initiator identity of N-formylmethionyl-tRNA by promoting its recognition by IF2 and preventing the misappropriation of this tRNA by the elongation apparatus. The polypeptide is Methionyl-tRNA formyltransferase (Streptococcus gordonii (strain Challis / ATCC 35105 / BCRC 15272 / CH1 / DL1 / V288)).